The chain runs to 104 residues: Large ribosomal subunit protein bL21 (104 aa).

This sequence belongs to the bacterial ribosomal protein bL21 family. In terms of assembly, part of the 50S ribosomal subunit. Contacts protein L20.

In terms of biological role, this protein binds to 23S rRNA in the presence of protein L20. The chain is Large ribosomal subunit protein bL21 from Agrobacterium fabrum (strain C58 / ATCC 33970) (Agrobacterium tumefaciens (strain C58)).